Here is a 470-residue protein sequence, read N- to C-terminus: ATP synthase subunit beta (470 aa).

Gly-157–Thr-164 is an ATP binding site.

It belongs to the ATPase alpha/beta chains family. F-type ATPases have 2 components, CF(1) - the catalytic core - and CF(0) - the membrane proton channel. CF(1) has five subunits: alpha(3), beta(3), gamma(1), delta(1), epsilon(1). CF(0) has three main subunits: a(1), b(2) and c(9-12). The alpha and beta chains form an alternating ring which encloses part of the gamma chain. CF(1) is attached to CF(0) by a central stalk formed by the gamma and epsilon chains, while a peripheral stalk is formed by the delta and b chains.

The protein localises to the cell inner membrane. The catalysed reaction is ATP + H2O + 4 H(+)(in) = ADP + phosphate + 5 H(+)(out). Produces ATP from ADP in the presence of a proton gradient across the membrane. The catalytic sites are hosted primarily by the beta subunits. This chain is ATP synthase subunit beta, found in Geobacter metallireducens (strain ATCC 53774 / DSM 7210 / GS-15).